Consider the following 504-residue polypeptide: Histidine--tRNA ligase (504 aa).

It belongs to the class-II aminoacyl-tRNA synthetase family. Homodimer.

The protein resides in the cytoplasm. The enzyme catalyses tRNA(His) + L-histidine + ATP = L-histidyl-tRNA(His) + AMP + diphosphate + H(+). The protein is Histidine--tRNA ligase (hisS) of Rhizobium meliloti (strain 1021) (Ensifer meliloti).